The sequence spans 373 residues: Flap endonuclease 1 (373 aa).

Residues 1 to 105 (MGIKGLNALI…GELEKRLKRR (105 aa)) form an N-domain region. Residue aspartate 34 coordinates Mg(2+). Positions 47 and 71 each coordinate DNA. Positions 87, 159, 161, 180, and 182 each coordinate Mg(2+). Residues 123-254 (DIAKFERRTV…VTAFKLIKEH (132 aa)) form an I-domain region. Residue glutamate 159 participates in DNA binding. DNA-binding residues include glycine 232 and aspartate 234. Residue aspartate 234 participates in Mg(2+) binding. The tract at residues 340-348 (TQGRLDKFF) is interaction with PCNA. Residues 347–373 (FFVVKKRPAEEKKGKNTKEEKPKKKRK) are disordered.

It belongs to the XPG/RAD2 endonuclease family. FEN1 subfamily. In terms of assembly, interacts with PCNA. Three molecules of FEN1 bind to one PCNA trimer with each molecule binding to one PCNA monomer. PCNA stimulates the nuclease activity without altering cleavage specificity. The cofactor is Mg(2+). Phosphorylated. Phosphorylation upon DNA damage induces relocalization to the nuclear plasma.

Its subcellular location is the nucleus. It is found in the nucleolus. The protein resides in the nucleoplasm. It localises to the mitochondrion. In terms of biological role, structure-specific nuclease with 5'-flap endonuclease and 5'-3' exonuclease activities involved in DNA replication and repair. During DNA replication, cleaves the 5'-overhanging flap structure that is generated by displacement synthesis when DNA polymerase encounters the 5'-end of a downstream Okazaki fragment. It enters the flap from the 5'-end and then tracks to cleave the flap base, leaving a nick for ligation. Also involved in the long patch base excision repair (LP-BER) pathway, by cleaving within the apurinic/apyrimidinic (AP) site-terminated flap. Acts as a genome stabilization factor that prevents flaps from equilibrating into structures that lead to duplications and deletions. Also possesses 5'-3' exonuclease activity on nicked or gapped double-stranded DNA, and exhibits RNase H activity. Also involved in replication and repair of rDNA and in repairing mitochondrial DNA. The sequence is that of Flap endonuclease 1 from Komagataella phaffii (strain GS115 / ATCC 20864) (Yeast).